Here is a 363-residue protein sequence, read N- to C-terminus: uncharacterized protein (363 aa).

Positions 35–262 (TVPGPPGAES…GLSPCCGDGG (228 aa)) are disordered. The segment covering 56–75 (AVSSSRNPNSAGRTPNSYLT) has biased composition (polar residues). Over residues 100–116 (GADPALGSLPAAGLSGL) the composition is skewed to low complexity.

This is an uncharacterized protein from Homo sapiens (Human).